The following is a 163-amino-acid chain: Protein YtsP (163 aa).

The protein belongs to the free Met sulfoxide reductase family.

The sequence is that of Protein YtsP (ytsP) from Bacillus subtilis (strain 168).